The primary structure comprises 450 residues: Phosphoglucosamine mutase (450 aa).

Residue serine 101 is the Phosphoserine intermediate of the active site. Residues serine 101, aspartate 240, aspartate 242, and aspartate 244 each coordinate Mg(2+). Serine 101 bears the Phosphoserine mark.

Belongs to the phosphohexose mutase family. It depends on Mg(2+) as a cofactor. Activated by phosphorylation.

It carries out the reaction alpha-D-glucosamine 1-phosphate = D-glucosamine 6-phosphate. Functionally, catalyzes the conversion of glucosamine-6-phosphate to glucosamine-1-phosphate. This is Phosphoglucosamine mutase from Streptococcus equi subsp. equi (strain 4047).